Consider the following 643-residue polypeptide: Enzymatic polyprotein (643 aa).

The 204-residue stretch at 6-209 (NPNATFITVK…KEVNVPNNIP (204 aa)) folds into the Peptidase A3A domain. Asp26 (for protease activity) is an active-site residue. In terms of domain architecture, Reverse transcriptase spans 226–410 (VRKGIIEESK…QTIDFLGLTL (185 aa)). Residues Asp296, Asp360, and Asp361 each coordinate Mg(2+).

The protein belongs to the caulimoviridae enzymatic polyprotein family.

It carries out the reaction DNA(n) + a 2'-deoxyribonucleoside 5'-triphosphate = DNA(n+1) + diphosphate. Functionally, encodes for at least two polypeptides: protease (PR) and reverse transcriptase (RT). The protease processes the polyprotein in cis. Reverse transcriptase is multifunctional enzyme that converts the viral RNA genome into dsDNA in viral cytoplasmic capsids. This enzyme displays a DNA polymerase activity that can copy either DNA or RNA templates, and a ribonuclease H (RNase H) activity that cleaves the RNA strand of RNA-DNA heteroduplexes in a partially processive 3'- to 5'-endonucleasic mode. Neo-synthesized pregenomic RNA (pgRNA) are encapsidated, and reverse-transcribed inside the nucleocapsid. Partial (+)DNA is synthesized from the (-)DNA template and generates the relaxed circular DNA (RC-DNA) genome. After budding and infection, the RC-DNA migrates in the nucleus, and is converted into a plasmid-like covalently closed circular DNA (cccDNA). The protein is Enzymatic polyprotein of Cestrum parqui (CmYLCV).